The primary structure comprises 720 residues: Secreted RxLR effector protein 138 (720 aa).

The N-terminal stretch at 1–20 is a signal peptide; that stretch reads MRSAFYVAIVLLVAAGSQTA. The short motif at 56–71 is the RxLR-dEER element; the sequence is RNLKDDFMFSAGDEER. Residues 264–335 are disordered; that stretch reads ESNTRKRNNV…VAPPEPSRLD (72 aa). Over residues 320–335 the composition is skewed to basic and acidic residues; it reads KQHDHRVAPPEPSRLD. The N-linked (GlcNAc...) asparagine glycan is linked to asparagine 609.

Belongs to the RxLR effector family.

It is found in the secreted. The protein localises to the host nucleus. Secreted effector that acts as an elicitor that induces cell death in host plant cells. This is Secreted RxLR effector protein 138 from Plasmopara viticola (Downy mildew of grapevine).